The following is a 178-amino-acid chain: Large ribosomal subunit protein uL6 (178 aa).

The protein belongs to the universal ribosomal protein uL6 family. Part of the 50S ribosomal subunit.

In terms of biological role, this protein binds to the 23S rRNA, and is important in its secondary structure. It is located near the subunit interface in the base of the L7/L12 stalk, and near the tRNA binding site of the peptidyltransferase center. The sequence is that of Large ribosomal subunit protein uL6 from Corynebacterium kroppenstedtii (strain DSM 44385 / JCM 11950 / CIP 105744 / CCUG 35717).